We begin with the raw amino-acid sequence, 218 residues long: MDVCLVDGLWGRRILVGGRKGAVHGCGRQRALEDVKVIGMYSRAGWDIMCLSDGGGGEKLEDGLGWRFSRSKIEMLKGSLEEGGGFRDSDLAPVGCRRKGICFPVGGLLPYLALRSVAYICVFGDSSRAPDLIREAFESPHFKRFDGAGTYKEAKGRCGMRFADVVNGAFGQISDMADKVGKGEPEVWCIWKKRGEVEMLLKVKEYRKGYGSGKRRRR.

This sequence belongs to the UPF0329 family.

In Encephalitozoon cuniculi (strain GB-M1) (Microsporidian parasite), this protein is UPF0329 protein ECU10_1860.